The following is a 389-amino-acid chain: Cytochrome f (389 aa).

Residues 1-42 form the signal peptide; that stretch reads MTTFFISKVNGPVNKSLIWLKIHIYEFFLLKFMLLFPPTVCS. Residues Tyr105, Cys125, Cys128, and His129 each coordinate heme. Residues 355 to 375 form a helical membrane-spanning segment; it reads LQALIVFFIFVILTQLFLVLK.

It belongs to the cytochrome f family. In terms of assembly, the 4 large subunits of the cytochrome b6-f complex are cytochrome b6, subunit IV (17 kDa polypeptide, petD), cytochrome f and the Rieske protein, while the 4 small subunits are PetG, PetL, PetM and PetN. The complex functions as a dimer. Heme serves as cofactor.

The protein localises to the plastid. The protein resides in the chloroplast thylakoid membrane. In terms of biological role, component of the cytochrome b6-f complex, which mediates electron transfer between photosystem II (PSII) and photosystem I (PSI), cyclic electron flow around PSI, and state transitions. The chain is Cytochrome f from Pleurastrum terricola (Filamentous green alga).